A 99-amino-acid polypeptide reads, in one-letter code: MSTILVLGGSNGRTLEKLAKKRDCQVIFHDGKNHGGVKKTFRSVIKKCDVIVVQKGACGHVSIDVAKEYAKKYDVPLLFNQGFGGTGALEIGLKHLQVA.

Belongs to the UPF0751 family.

In Bacillus cereus (strain ATCC 10987 / NRS 248), this protein is UPF0751 protein BCE_A0020.